A 1226-amino-acid chain; its full sequence is Phosphatidylinositol 3,4,5-trisphosphate 5-phosphatase 2B (1226 aa).

One can recognise an SH2 domain in the interval 6–102 (WYHRDISRVR…GLVAPLLYPV (97 aa)). Positions 106–144 (SEANDESSDGDDEKPGSTFANSPPRAISPTATSPPSSSA) are disordered. Residues 108–117 (ANDESSDGDD) are compositionally biased toward acidic residues. Over residues 127-144 (SPPRAISPTATSPPSSSA) the composition is skewed to low complexity. Residues 906–909 (NPAY) carry the NPXY motif motif. Tyr909 bears the Phosphotyrosine mark. Disordered regions lie at residues 945 to 964 (RVTG…DFTE) and 985 to 1035 (SSAA…LSGK). The segment covering 1011–1025 (HSSNSSLQLQSHKNN) has biased composition (low complexity). The SAM domain maps to 1163–1226 (GAPETVRELL…ILENLPKIWD (64 aa)).

Belongs to the inositol 1,4,5-trisphosphate 5-phosphatase family. Post-translationally, tyrosine phosphorylated by the members of the SRC family after exposure to a diverse array of extracellular stimuli.

The protein localises to the cytoplasm. Its subcellular location is the cytosol. The protein resides in the cytoskeleton. It is found in the membrane. It localises to the cell projection. The protein localises to the filopodium. Its subcellular location is the lamellipodium. The protein resides in the nucleus. It is found in the nucleus speckle. The catalysed reaction is a 1,2-diacyl-sn-glycero-3-phospho-(1D-myo-inositol-3,4,5-trisphosphate) + H2O = a 1,2-diacyl-sn-glycero-3-phospho-(1D-myo-inositol-3,4-bisphosphate) + phosphate. Functionally, phosphatidylinositol (PtdIns) phosphatase that specifically hydrolyzes the 5-phosphate of phosphatidylinositol-3,4,5-trisphosphate (PtdIns(3,4,5)P3) to produce PtdIns(3,4)P2, thereby negatively regulating the PI3K (phosphoinositide 3-kinase) pathways. Plays a central role in regulation of PI3K-dependent insulin signaling, although the precise molecular mechanisms and signaling pathways remain unclear. Part of a signaling pathway that regulates actin cytoskeleton remodeling. Required for the maintenance and dynamic remodeling of actin structures as well as in endocytosis, having a major impact on ligand-induced EGFR internalization and degradation. Participates in regulation of cortical and submembraneous actin. Regulates cell adhesion and cell spreading. Acts as a negative regulator of the FC-gamma-RIIA receptor (FCGR2A). Mediates signaling from the FC-gamma-RIIB receptor (FCGR2B), playing a central role in terminating signal transduction from activating immune/hematopoietic cell receptor systems. May also hydrolyze PtdIns(1,3,4,5)P4, and could thus affect the levels of the higher inositol polyphosphates like InsP6. This is Phosphatidylinositol 3,4,5-trisphosphate 5-phosphatase 2B (inppl1b) from Danio rerio (Zebrafish).